The following is a 318-amino-acid chain: Myoblast determination protein 1 (318 aa).

Methionine 1 participates in a covalent cross-link: Peptide (Met-Gly) (interchain with G-Cter in ubiquitin). Position 104 is an N6-methyllysine; by EHMT2 (lysine 104). Residues 109–160 form the bHLH domain; that stretch reads DRRKAATMRERRRLSKVNEAFETLKRCTSSNPNQRLPKVEILRNAIRYIEGL. 2 disordered regions span residues 174–224 and 266–318; these read AAAA…RRRN and APAL…YQVL. Over residues 197-207 the composition is skewed to polar residues; the sequence is SDASSPRSNCS. Over residues 266 to 276 the composition is skewed to low complexity; the sequence is APALLLADAPP.

Efficient DNA binding requires dimerization with another bHLH protein. Seems to form active heterodimers with ITF-2. Interacts with SUV39H1. Interacts with DDX5. Interacts with CHD2. Interacts with TSC22D3. Interacts with SETD3. Interacts with P-TEFB complex; promotes the transcriptional activity of MYOD1 through its CDK9-mediated phosphorylation. Interacts with CSRP3. Interacts with NUPR1. In terms of processing, phosphorylated by CDK9. This phosphorylation promotes its function in muscle differentiation. Acetylated by a complex containing EP300 and PCAF. The acetylation is essential to activate target genes. Conversely, its deacetylation by SIRT1 inhibits its function. Post-translationally, ubiquitinated on the N-terminus; which is required for proteasomal degradation. In terms of processing, methylation at Lys-104 by EHMT2/G9a inhibits myogenic activity.

The protein resides in the nucleus. Functionally, acts as a transcriptional activator that promotes transcription of muscle-specific target genes and plays a role in muscle differentiation. Together with MYF5 and MYOG, co-occupies muscle-specific gene promoter core region during myogenesis. Induces fibroblasts to differentiate into myoblasts. Interacts with and is inhibited by the twist protein. This interaction probably involves the basic domains of both proteins. The sequence is that of Myoblast determination protein 1 (MYOD1) from Bos taurus (Bovine).